We begin with the raw amino-acid sequence, 547 residues long: uncharacterized protein (547 aa).

To B.subtilis RocB.

This is an uncharacterized protein from Bacillus subtilis (strain 168).